Here is a 786-residue protein sequence, read N- to C-terminus: Ribosome biogenesis protein BOP1 homolog (786 aa).

A compositionally biased stretch (basic residues) spans 1–11; sequence MAKKSAIKRKV. Residues 1–161 are disordered; the sequence is MAKKSAIKRK…NSDTSDEEDI (161 aa). Polar residues predominate over residues 17–26; the sequence is INEQASVSEQ. 3 stretches are compositionally biased toward acidic residues: residues 44–53, 60–72, and 82–114; these read EDTTDDEGID, TSDD…DEEG, and SGED…DDAK. Polar residues predominate over residues 122–135; that stretch reads KATLSKTTGDSSNI. A compositionally biased stretch (basic and acidic residues) spans 141–150; that stretch reads PRRDPSKPEY. Residues 151–160 are compositionally biased toward acidic residues; that stretch reads ENSDTSDEED. 7 WD repeats span residues 447-488, 490-528, 572-614, 617-655, 658-697, 701-740, and 756-786; these read GHTD…RTIE, NDVV…KLLV, THFK…SQIP, KSKG…LIKK, TNSK…KPYQ, LHRN…DLLQ, and RDEF…RLYT.

The protein belongs to the WD repeat BOP1/ERB1 family.

It is found in the nucleus. The protein resides in the nucleolus. The protein localises to the nucleoplasm. Functionally, required for maturation of ribosomal RNAs and formation of the large ribosomal subunit. This is Ribosome biogenesis protein BOP1 homolog from Drosophila grimshawi (Hawaiian fruit fly).